The chain runs to 162 residues: Regulatory protein RecX (162 aa).

The protein belongs to the RecX family.

The protein resides in the cytoplasm. Functionally, modulates RecA activity. The sequence is that of Regulatory protein RecX from Xanthomonas campestris pv. campestris (strain 8004).